Consider the following 386-residue polypeptide: Succinate--CoA ligase [ADP-forming] subunit beta (386 aa).

K46, E99, A102, and E107 together coordinate ATP. 2 residues coordinate Mg(2+): N199 and D213. Substrate is bound by residues N264 and 321–323 (GIM).

This sequence belongs to the succinate/malate CoA ligase beta subunit family. In terms of assembly, heterotetramer of two alpha and two beta subunits. Mg(2+) is required as a cofactor.

It catalyses the reaction succinate + ATP + CoA = succinyl-CoA + ADP + phosphate. The enzyme catalyses GTP + succinate + CoA = succinyl-CoA + GDP + phosphate. It participates in carbohydrate metabolism; tricarboxylic acid cycle; succinate from succinyl-CoA (ligase route): step 1/1. In terms of biological role, succinyl-CoA synthetase functions in the citric acid cycle (TCA), coupling the hydrolysis of succinyl-CoA to the synthesis of either ATP or GTP and thus represents the only step of substrate-level phosphorylation in the TCA. The beta subunit provides nucleotide specificity of the enzyme and binds the substrate succinate, while the binding sites for coenzyme A and phosphate are found in the alpha subunit. This Orientia tsutsugamushi (strain Boryong) (Rickettsia tsutsugamushi) protein is Succinate--CoA ligase [ADP-forming] subunit beta.